The sequence spans 120 residues: Flagellar protein FliT (120 aa).

The interval 1-50 is required for homodimerization; that stretch reads MERHQHLLSEYQQILTLSEQMLMLATVENWNTLVDLEMTYLKAVENTANI. Positions 60–98 are fliD binding; sequence LQELLRQKLRSILENEIEIKRLLQRRLDKLSELVGQSTR.

It belongs to the FliT family. As to quaternary structure, homodimer. Interacts with FliD and FlhC.

Its subcellular location is the cytoplasm. The protein resides in the cytosol. Functionally, dual-function protein that regulates the transcription of class 2 flagellar operons and that also acts as an export chaperone for the filament-capping protein FliD. As a transcriptional regulator, acts as an anti-FlhDC factor; it directly binds FlhC, thus inhibiting the binding of the FlhC/FlhD complex to class 2 promoters, resulting in decreased expression of class 2 flagellar operons. As a chaperone, effects FliD transition to the membrane by preventing its premature polymerization, and by directing it to the export apparatus. In Yersinia pestis (strain Pestoides F), this protein is Flagellar protein FliT.